Consider the following 185-residue polypeptide: Probable chorismate pyruvate-lyase (185 aa).

Residues arginine 84, leucine 122, and glutamate 178 each contribute to the substrate site.

This sequence belongs to the UbiC family.

The protein resides in the cytoplasm. It carries out the reaction chorismate = 4-hydroxybenzoate + pyruvate. It participates in cofactor biosynthesis; ubiquinone biosynthesis. Removes the pyruvyl group from chorismate, with concomitant aromatization of the ring, to provide 4-hydroxybenzoate (4HB) for the ubiquinone pathway. The polypeptide is Probable chorismate pyruvate-lyase (Hydrogenovibrio crunogenus (strain DSM 25203 / XCL-2) (Thiomicrospira crunogena)).